The primary structure comprises 347 residues: UPF0284 protein SSO2213 (347 aa).

Belongs to the UPF0284 family.

This chain is UPF0284 protein SSO2213, found in Saccharolobus solfataricus (strain ATCC 35092 / DSM 1617 / JCM 11322 / P2) (Sulfolobus solfataricus).